Here is a 93-residue protein sequence, read N- to C-terminus: Acylphosphatase (93 aa).

The Acylphosphatase-like domain maps to 5–93 (AKQIVVRGRV…PNFRGFQVTG (89 aa)). Catalysis depends on residues Arg-20 and Asn-38.

It belongs to the acylphosphatase family.

It carries out the reaction an acyl phosphate + H2O = a carboxylate + phosphate + H(+). This is Acylphosphatase (acyP) from Lacticaseibacillus paracasei (strain ATCC 334 / BCRC 17002 / CCUG 31169 / CIP 107868 / KCTC 3260 / NRRL B-441) (Lactobacillus paracasei).